The primary structure comprises 210 residues: MNPLRVKLDALISKTSLTVTEQQREQLVGYVQLLDKWNKAYNLTSVRDPMEMLVKHILDSLVVSPHLVGERFIDVGSGPGLPGIPLAIMHPDKEFVLLDSLGKRIRFLKQVIHDLKINNVLPVQSRVEEFDPESGFDGVLSRAFASMTDMVNWCQHLPKPNAGVFLALKGVRPDDEITLLPEWCSVTDIKALQVPELEGERHLVILSRKG.

S-adenosyl-L-methionine is bound by residues Gly76, Leu81, 127–128 (VE), and Arg142.

Belongs to the methyltransferase superfamily. RNA methyltransferase RsmG family.

The protein localises to the cytoplasm. The catalysed reaction is guanosine(527) in 16S rRNA + S-adenosyl-L-methionine = N(7)-methylguanosine(527) in 16S rRNA + S-adenosyl-L-homocysteine. Specifically methylates the N7 position of guanine in position 527 of 16S rRNA. The polypeptide is Ribosomal RNA small subunit methyltransferase G (Vibrio cholerae serotype O1 (strain ATCC 39541 / Classical Ogawa 395 / O395)).